Consider the following 248-residue polypeptide: MSYDRAITVFSPDGHLFQVEYAQEAIKKGSTAVGVRGRDIVVLGVEKKSVAKLQDERTVRKICALDDNVCMAFAGLTADARIVINRARVECQSHRLTVEDSVTVEYITRYIASLKQRYTQSNGRRPFGISALIVGFDFDGTPRLYQTDPSGTYHAWKANAIGRGAKSVREFLEKNYTDEAIETDDLTIKLVIKALLEVVQSGGKNIELAVMRRDQPLKILNPEEIEEYVAEIEKEKEENEKKKQKKAS.

A glycan (O-linked (GlcNAc) serine) is linked at Ser130. Residue Tyr153 is modified to Phosphotyrosine.

This sequence belongs to the peptidase T1A family. The 26S proteasome consists of a 20S proteasome core and two 19S regulatory subunits. The 20S proteasome core is a barrel-shaped complex made of 28 subunits that are arranged in four stacked rings. The two outer rings are each formed by seven alpha subunits, and the two inner rings are formed by seven beta subunits. The proteolytic activity is exerted by three beta-subunits PSMB5, PSMB6 and PSMB7. PSMA7 interacts directly with the PSMG1-PSMG2 heterodimer which promotes 20S proteasome assembly. Interacts with HIF1A. Interacts with RAB7A. Interacts with PRKN. Interacts with ABL1 and ABL2. Interacts with EMAP2. Interacts with MAVS.

The protein localises to the cytoplasm. It localises to the nucleus. Functionally, component of the 20S core proteasome complex involved in the proteolytic degradation of most intracellular proteins. This complex plays numerous essential roles within the cell by associating with different regulatory particles. Associated with two 19S regulatory particles, forms the 26S proteasome and thus participates in the ATP-dependent degradation of ubiquitinated proteins. The 26S proteasome plays a key role in the maintenance of protein homeostasis by removing misfolded or damaged proteins that could impair cellular functions, and by removing proteins whose functions are no longer required. Associated with the PA200 or PA28, the 20S proteasome mediates ubiquitin-independent protein degradation. This type of proteolysis is required in several pathways including spermatogenesis (20S-PA200 complex) or generation of a subset of MHC class I-presented antigenic peptides (20S-PA28 complex). Inhibits the transactivation function of HIF-1A under both normoxic and hypoxia-mimicking conditions. The interaction with EMAP2 increases the proteasome-mediated HIF-1A degradation under the hypoxic conditions. Plays a role in hepatitis C virus internal ribosome entry site-mediated translation. Mediates nuclear translocation of the androgen receptor (AR) and thereby enhances androgen-mediated transactivation. Promotes MAVS degradation and thereby negatively regulates MAVS-mediated innate immune response. This chain is Proteasome subunit alpha type-7 (PSMA7), found in Pongo abelii (Sumatran orangutan).